Reading from the N-terminus, the 933-residue chain is Progesterone receptor (933 aa).

The interval 1-164 (MTELKAKGPR…PATQGVLSPL (164 aa)) is AF3; mediates transcriptional activation. A disordered region spans residues 1–256 (MTELKAKGPR…AAAGGGAAAV (256 aa)). The segment at 1-566 (MTELKAKGPR…YSFESLPQKI (566 aa)) is modulating, Pro-Rich. Residue Ser20 is modified to Phosphoserine. The LXXL motif 1 signature appears at 55–59 (LDGLL). Position 81 is a phosphoserine (Ser81). Positions 115 to 119 (LDTLL) match the LXXL motif 2 motif. Phosphoserine occurs at positions 130 and 162. The mediates transcriptional transrepression stretch occupies residues 165–305 (MSRSGCKAGD…LATTMMDFIH (141 aa)). The short motif at 183 to 187 (KVLPR) is the Nuclear localization signal element. A phosphoserine mark is found at Ser190 and Ser213. Acidic residues predominate over residues 220 to 231 (EVEEEDGSESEE). The segment covering 232 to 246 (SAGPLLKGKPRALGG) has biased composition (low complexity). The residue at position 294 (Ser294) is a Phosphoserine; by MAPK1. Positions 331 to 378 (GGAGAASAFAPPRSSPSASSTPVAVGDFPDCAYPPDAEPKDDAYPLYS) are disordered. Residues 335 to 350 (AASAFAPPRSSPSASS) are compositionally biased toward low complexity. Residue Ser345 is modified to Phosphoserine; by MAPK. A Glycyl lysine isopeptide (Lys-Gly) (interchain with G-Cter in SUMO); alternate cross-link involves residue Lys388. A Glycyl lysine isopeptide (Lys-Gly) (interchain with G-Cter in ubiquitin); alternate cross-link involves residue Lys388. Residue Ser400 is modified to Phosphoserine; by CDK2. The disordered stretch occupies residues 415-452 (PDFPLGPPPPLPPRAPPSRPGEAAVTAAPASASVSSAS). Residues 418–433 (PLGPPPPLPPRAPPSR) are compositionally biased toward pro residues. A compositionally biased stretch (low complexity) spans 434-452 (PGEAAVTAAPASASVSSAS). The interval 456-546 (STLECILYKA…VYPPYLNYLR (91 aa)) is AF1; mediates transcriptional activation. A Glycyl lysine isopeptide (Lys-Gly) (interchain with G-Cter in SUMO) cross-link involves residue Lys531. 2 NR C4-type zinc fingers span residues 567 to 587 (CLIC…CGSC) and 603 to 627 (CAGR…LRKC). A DNA-binding region (nuclear receptor) is located at residues 567 to 639 (CLICGDEASG…AGMVLGGRKF (73 aa)). Ser676 carries the post-translational modification Phosphoserine. The NR LBD domain maps to 679–913 (QDIQLIPPLI…EFPEMMSEVI (235 aa)). The tract at residues 687-933 (LINLLMSIEP…MVKPLLFHKK (247 aa)) is AF2; mediates transcriptional activation. Residue Arg766 coordinates progesterone.

Belongs to the nuclear hormone receptor family. In terms of assembly, interacts with SMARD1 and UNC45A. Interacts with CUEDC2; the interaction promotes ubiquitination, decreases sumoylation, and represses transcriptional activity. Interacts with PIAS3; the interaction promotes sumoylation of PR in a hormone-dependent manner, inhibits DNA-binding, and alters nuclear export. Interacts with SP1; the interaction requires ligand-induced phosphorylation on Ser-345 by ERK1/2-MAPK. Interacts with PRMT2. Interacts with NCOA2 and NCOA1. Interacts with KLF9. Interacts with GTF2B. In terms of processing, phosphorylated on multiple serine sites. Several of these sites are hormone-dependent. Phosphorylation on Ser-294 is highly hormone-dependent and modulates ubiquitination and sumoylation on Lys-388. Phosphorylation on Ser-102 and Ser-345 also requires induction by hormone. Basal phosphorylation on Ser-81, Ser-162, Ser-190 and Ser-400 is increased in response to progesterone and can be phosphorylated in vitro by the CDK2-A1 complex. Increased levels of phosphorylation on Ser-400 also in the presence of EGF, heregulin, IGF, PMA and FBS. Phosphorylation at this site by CDK2 is ligand-independent, and increases nuclear translocation and transcriptional activity. Phosphorylation at Ser-162 and Ser-294, but not at Ser-190, is impaired during the G(2)/M phase of the cell cycle. Phosphorylation on Ser-345 by ERK1/2 MAPK is required for interaction with SP1. Sumoylation is hormone-dependent and represses transcriptional activity. Sumoylation on all three sites is enhanced by PIAS3. Desumoylated by SENP1. Sumoylation on Lys-388, the main site of sumoylation, is repressed by ubiquitination on the same site, and modulated by phosphorylation at Ser-294. Post-translationally, ubiquitination is hormone-dependent and represses sumoylation on the same site. Promoted by MAPK-mediated phosphorylation on Ser-294. Ubiquitinated by UBR5, leading to its degradation: UBR5 specifically recognizes and binds ligand-bound PGR when it is not associated with coactivators (NCOAs). In presence of NCOAs, the UBR5-degron is not accessible, preventing its ubiquitination and degradation. In terms of processing, palmitoylated by ZDHHC7 and ZDHHC21. Palmitoylation is required for plasma membrane targeting and for rapid intracellular signaling via ERK and AKT kinases and cAMP generation.

The protein localises to the nucleus. It is found in the cytoplasm. In terms of biological role, the steroid hormones and their receptors are involved in the regulation of eukaryotic gene expression and affect cellular proliferation and differentiation in target tissues. Transcriptional activator of several progesteron-dependent promoters in a variety of cell types. Involved in activation of SRC-dependent MAPK signaling on hormone stimulation. The chain is Progesterone receptor (PGR) from Pan paniscus (Pygmy chimpanzee).